The primary structure comprises 365 residues: DNA N6-methyl methyltransferase (365 aa).

The protein belongs to the MT-A70-like family.

It catalyses the reaction a 2'-deoxyadenosine in DNA + S-adenosyl-L-methionine = an N(6)-methyl-2'-deoxyadenosine in DNA + S-adenosyl-L-homocysteine + H(+). Methylates DNA on the 6th position of adenine (N(6)-methyladenosine). N(6)-methyladenosine (m6A) DNA is involved in epigenetic transgenerational inheritance. The protein is DNA N6-methyl methyltransferase of Caenorhabditis elegans.